We begin with the raw amino-acid sequence, 447 residues long: Dihydroorotase (447 aa).

The Zn(2+) site is built by His-81 and His-83. Substrate is bound by residues 83 to 85 and Asn-115; that span reads HFR. Residues Asp-171, His-198, and His-252 each coordinate Zn(2+). Residue Asn-298 coordinates substrate. Asp-325 provides a ligand contact to Zn(2+). Asp-325 is an active-site residue. Residues His-329 and 343-344 each bind substrate; that span reads FG.

This sequence belongs to the metallo-dependent hydrolases superfamily. DHOase family. Class I DHOase subfamily. Zn(2+) serves as cofactor.

It carries out the reaction (S)-dihydroorotate + H2O = N-carbamoyl-L-aspartate + H(+). It participates in pyrimidine metabolism; UMP biosynthesis via de novo pathway; (S)-dihydroorotate from bicarbonate: step 3/3. Functionally, catalyzes the reversible cyclization of carbamoyl aspartate to dihydroorotate. The protein is Dihydroorotase of Ehrlichia canis (strain Jake).